A 379-amino-acid chain; its full sequence is Homoserine O-succinyltransferase (379 aa).

Residues 51–360 enclose the AB hydrolase-1 domain; it reads NAVLICHALS…DSPYGHDAFL (310 aa). Residue S157 is the Nucleophile of the active site. R227 lines the substrate pocket. Residues D323 and H356 contribute to the active site. D357 lines the substrate pocket.

Belongs to the AB hydrolase superfamily. MetX family. Homodimer.

The protein localises to the cytoplasm. It catalyses the reaction L-homoserine + succinyl-CoA = O-succinyl-L-homoserine + CoA. Its pathway is amino-acid biosynthesis; L-methionine biosynthesis via de novo pathway; O-succinyl-L-homoserine from L-homoserine: step 1/1. In terms of biological role, transfers a succinyl group from succinyl-CoA to L-homoserine, forming succinyl-L-homoserine. The protein is Homoserine O-succinyltransferase of Pseudomonas putida (strain GB-1).